The chain runs to 115 residues: Con-Ins G1b (115 aa).

Positions methionine 1–glycine 24 are cleaved as a signal peptide. A propeptide spanning residues asparagine 25–arginine 29 is cleaved from the precursor. Proline 34 bears the 4-hydroxyproline; partial mark. 3 disulfide bridges follow: cysteine 38–cysteine 101, cysteine 50–cysteine 114, and cysteine 100–cysteine 105. Glutamate 41 carries the 4-carboxyglutamate modification. Positions arginine 52–arginine 94 are cleaved as a propeptide — c peptide. 4-carboxyglutamate is present on glutamate 98. Proline 104 is subject to 4-hydroxyproline; partial. Glutamate 109 is subject to 4-carboxyglutamate; partial. Residue cysteine 114 is modified to Cysteine amide.

This sequence belongs to the insulin family. In terms of assembly, heterodimer of A and B chains; disulfide-linked. As to expression, expressed by the venom gland.

The protein localises to the secreted. This venom insulin, from a fish-hunting cone snail, facilitates prey capture by rapidly inducing hypoglycemic shock. It is one of the smallest known insulin found in nature and lacks the C-terminal segment of the B chain that, in human insulin, mediates engagement of the insulin receptor (INSR) and assembly of the hormone's hexameric storage form. Despite lacking this segment, it both binds and activates human insulin receptor (long isoform (HIR-B) of INSR) with only a 10-fold lower potency. In vivo, intraperitoneal injection of this peptide into zebrafish lowers blood glucose with the same potency than human insulin. In addition, when applied to water, this peptide reduces overall locomotor activity of zebrafish larvae, observed as a significant decrease in the percentage of time spent swimming and movement frequency. The polypeptide is Con-Ins G1b (Conus geographus (Geography cone)).